The sequence spans 313 residues: Protoheme IX farnesyltransferase (313 aa).

A run of 8 helical transmembrane segments spans residues 32–52, 53–73, 120–140, 153–173, 180–200, 226–246, 248–268, and 284–304; these read VMSLVVFTALVGMLLAPGDFH, PVLAITAMLCIAVGGGAAGAL, ILVNWVAGALLAFTIFFYVVI, IVIGGAAGALPPVVAWAAVTG, LLLFAIIFFWTPPHFWALALF, ILLYTIVLVAVAAAPWPLGYF, AIYGVASLALGGWMLVLALRV, and LFKFSILYLFALFSILLLEVV.

This sequence belongs to the UbiA prenyltransferase family. Protoheme IX farnesyltransferase subfamily.

It is found in the cell inner membrane. It carries out the reaction heme b + (2E,6E)-farnesyl diphosphate + H2O = Fe(II)-heme o + diphosphate. Its pathway is porphyrin-containing compound metabolism; heme O biosynthesis; heme O from protoheme: step 1/1. In terms of biological role, converts heme B (protoheme IX) to heme O by substitution of the vinyl group on carbon 2 of heme B porphyrin ring with a hydroxyethyl farnesyl side group. The sequence is that of Protoheme IX farnesyltransferase from Rhodopseudomonas palustris (strain HaA2).